Here is a 269-residue protein sequence, read N- to C-terminus: MTHKATEILTGKVMQKSVLITGCSSGIGLESALELKRQGFHVLAGCRKPDDVERMNSMGFTGVLIDLDSPESVDRAADEVIALTDNCLYGIFNNAGFGMYGPLSTISRAQMEQQFSANFFGAHQLTMRLLPAMLPHGEGRIVMTSSVMGLISTPGRGAYAASKYALEAWSDALRMELRHSGIKVSLIEPGPIRTRFTDNVNQTQSDKPVENPGIAARFTLGPEAVVDKVRHAFISEKPKMRYPVTLVTWAVMVLKRLLPGRVMDKILQG.

Residue 15 to 41 (QKSVLITGCSSGIGLESALELKRQGFH) coordinates NADP(+). Serine 146 provides a ligand contact to substrate. The active-site Proton acceptor is the tyrosine 159.

Belongs to the short-chain dehydrogenases/reductases (SDR) family.

This is an uncharacterized protein from Escherichia coli O6:H1 (strain CFT073 / ATCC 700928 / UPEC).